A 105-amino-acid chain; its full sequence is uncharacterized protein (105 aa).

This sequence belongs to the asfivirus C122R family.

The protein resides in the virion. This is an uncharacterized protein from African swine fever virus (strain Badajoz 1971 Vero-adapted) (Ba71V).